The primary structure comprises 408 residues: DNA polymerase processivity factor (408 aa).

The short motif at K344–R353 is the Nuclear localization signal element.

It belongs to the herpesviridae DNA polymerase processivity factor family. Interacts with the DNA polymerase catalytic subunit. Interacts with the origin-binding protein.

It localises to the host nucleus. Its function is as follows. Plays an essential role in viral DNA replication by acting as the polymerase accessory subunit. Associates with the viral polymerase to increase its processivity and forms high-affinity direct interactions with DNA. Facilitates the origin-binding protein loading onto DNA thus increasing its ability to assemble into a functional complex capable of unwinding duplex DNA. The polypeptide is DNA polymerase processivity factor (Varicella-zoster virus (strain Dumas) (HHV-3)).